Reading from the N-terminus, the 193-residue chain is Ribosomal RNA small subunit methyltransferase G (193 aa).

S-adenosyl-L-methionine is bound by residues Gly61, Leu66, 112–113 (IE), and Arg126.

Belongs to the methyltransferase superfamily. RNA methyltransferase RsmG family.

Its subcellular location is the cytoplasm. The enzyme catalyses guanosine(527) in 16S rRNA + S-adenosyl-L-methionine = N(7)-methylguanosine(527) in 16S rRNA + S-adenosyl-L-homocysteine. Its function is as follows. Specifically methylates the N7 position of guanine in position 527 of 16S rRNA. The chain is Ribosomal RNA small subunit methyltransferase G from Paracoccus denitrificans (strain Pd 1222).